The primary structure comprises 342 residues: Ferredoxin--NADP reductase (342 aa).

The FAD site is built by C17, D36, Q44, Y49, I89, F124, D289, and T330.

It belongs to the ferredoxin--NADP reductase type 2 family. As to quaternary structure, homodimer. FAD is required as a cofactor.

It catalyses the reaction 2 reduced [2Fe-2S]-[ferredoxin] + NADP(+) + H(+) = 2 oxidized [2Fe-2S]-[ferredoxin] + NADPH. This Rhodopseudomonas palustris (strain BisB5) protein is Ferredoxin--NADP reductase.